A 477-amino-acid chain; its full sequence is ATP synthase subunit beta (477 aa).

163–170 (GGAGVGKT) serves as a coordination point for ATP.

It belongs to the ATPase alpha/beta chains family. In terms of assembly, F-type ATPases have 2 components, CF(1) - the catalytic core - and CF(0) - the membrane proton channel. CF(1) has five subunits: alpha(3), beta(3), gamma(1), delta(1), epsilon(1). CF(0) has four main subunits: a(1), b(1), b'(1) and c(9-12).

It localises to the cellular thylakoid membrane. It catalyses the reaction ATP + H2O + 4 H(+)(in) = ADP + phosphate + 5 H(+)(out). Functionally, produces ATP from ADP in the presence of a proton gradient across the membrane. The catalytic sites are hosted primarily by the beta subunits. The protein is ATP synthase subunit beta of Synechococcus sp. (strain JA-3-3Ab) (Cyanobacteria bacterium Yellowstone A-Prime).